Here is a 294-residue protein sequence, read N- to C-terminus: NAD kinase (294 aa).

D74 acts as the Proton acceptor in catalysis. NAD(+) contacts are provided by residues 74 to 75, 148 to 149, H159, R176, D178, and 189 to 194; these read DG, NE, and TAYSLS.

It belongs to the NAD kinase family. A divalent metal cation serves as cofactor.

It localises to the cytoplasm. The catalysed reaction is NAD(+) + ATP = ADP + NADP(+) + H(+). In terms of biological role, involved in the regulation of the intracellular balance of NAD and NADP, and is a key enzyme in the biosynthesis of NADP. Catalyzes specifically the phosphorylation on 2'-hydroxyl of the adenosine moiety of NAD to yield NADP. This chain is NAD kinase, found in Pseudoalteromonas translucida (strain TAC 125).